Here is a 184-residue protein sequence, read N- to C-terminus: ATP synthase subunit b, chloroplastic (184 aa).

Residues 26-48 (ILATNLINLSVVLGVLIFFGKGV) traverse the membrane as a helical segment.

It belongs to the ATPase B chain family. As to quaternary structure, F-type ATPases have 2 components, F(1) - the catalytic core - and F(0) - the membrane proton channel. F(1) has five subunits: alpha(3), beta(3), gamma(1), delta(1), epsilon(1). F(0) has four main subunits: a(1), b(1), b'(1) and c(10-14). The alpha and beta chains form an alternating ring which encloses part of the gamma chain. F(1) is attached to F(0) by a central stalk formed by the gamma and epsilon chains, while a peripheral stalk is formed by the delta, b and b' chains.

The protein resides in the plastid. It localises to the chloroplast thylakoid membrane. In terms of biological role, f(1)F(0) ATP synthase produces ATP from ADP in the presence of a proton or sodium gradient. F-type ATPases consist of two structural domains, F(1) containing the extramembraneous catalytic core and F(0) containing the membrane proton channel, linked together by a central stalk and a peripheral stalk. During catalysis, ATP synthesis in the catalytic domain of F(1) is coupled via a rotary mechanism of the central stalk subunits to proton translocation. Component of the F(0) channel, it forms part of the peripheral stalk, linking F(1) to F(0). This is ATP synthase subunit b, chloroplastic from Acorus calamus (Sweet flag).